Reading from the N-terminus, the 101-residue chain is Small ribosomal subunit protein uS14 (101 aa).

The protein belongs to the universal ribosomal protein uS14 family. As to quaternary structure, part of the 30S ribosomal subunit. Contacts proteins S3 and S10.

Functionally, binds 16S rRNA, required for the assembly of 30S particles and may also be responsible for determining the conformation of the 16S rRNA at the A site. This is Small ribosomal subunit protein uS14 from Proteus mirabilis (strain HI4320).